Consider the following 294-residue polypeptide: MAAGKLLLYAGLSLSLCALGMLAVAICSDHWYETDARRYRERCRSFSSRRKDPGFIYIPNNSLPLRASRSRLDRWEEKLLLARNRRQLFAMSAADECSKRYNSTNMGLWSKCHRLGFDQEIEDLIRNGSIARCSYIKYHYSSATIPKDLSYNITKTIRQDEWHSLHLRRMTAGFMGMAVAIILFGWIIGMLGCCWDRGLMQYVAGLLFLMGGTFCIISLCTCVAGINFELSRYPRYIYGLPDDISHGYGWSMFCAWGGLGLSLIAGFFCTLAPSVQPIPRSTCPKSRQENGTVC.

A signal peptide spans 1-23; it reads MAAGKLLLYAGLSLSLCALGMLA. 3 helical membrane-spanning segments follow: residues 172–192, 206–226, and 252–272; these read AGFMGMAVAIILFGWIIGMLG, LLFLMGGTFCIISLCTCVAGI, and MFCAWGGLGLSLIAGFFCTLA.

Belongs to the TMEM178 family.

Its subcellular location is the membrane. The protein is Transmembrane protein 178B (tmem178b) of Danio rerio (Zebrafish).